We begin with the raw amino-acid sequence, 232 residues long: MLVSQSANHSINSLSRFGMSSHLNGIGNIVPMVVEQSGMGERAFDIYSRLLRERIIFLGTPIDDAVANTIVAQLLFLDAEDSEKDIQLYINSPGGSVYAGMAIYDTIQQIRPDVVTICFGLAASMGAFLLTAGTKGKRMSLPDSRIMIHQPLGGAQGQAIDIEIQAREILYIKAQLNQLLANHTGQPLERIEADTDRDFFMSAEEAKNYGLIDQVISRQNLPTAGENVTIVK.

The Nucleophile role is filled by Ser-124. His-149 is a catalytic residue.

The protein belongs to the peptidase S14 family. As to quaternary structure, fourteen ClpP subunits assemble into 2 heptameric rings which stack back to back to give a disk-like structure with a central cavity, resembling the structure of eukaryotic proteasomes.

It is found in the cytoplasm. The enzyme catalyses Hydrolysis of proteins to small peptides in the presence of ATP and magnesium. alpha-casein is the usual test substrate. In the absence of ATP, only oligopeptides shorter than five residues are hydrolyzed (such as succinyl-Leu-Tyr-|-NHMec, and Leu-Tyr-Leu-|-Tyr-Trp, in which cleavage of the -Tyr-|-Leu- and -Tyr-|-Trp bonds also occurs).. Cleaves peptides in various proteins in a process that requires ATP hydrolysis. Has a chymotrypsin-like activity. Plays a major role in the degradation of misfolded proteins. The polypeptide is ATP-dependent Clp protease proteolytic subunit 2 (Nostoc sp. (strain PCC 7120 / SAG 25.82 / UTEX 2576)).